Here is a 244-residue protein sequence, read N- to C-terminus: NAD-dependent protein deacetylase (244 aa).

The Deacetylase sirtuin-type domain maps to 1 to 244 (MTGEQLAHWI…LSAVQRAVMP (244 aa)). NAD(+)-binding residues include A22, T26, F33, R34, Q103, I105, D106, and H121. F33 lines the nicotinamide pocket. Positions 105 and 106 each coordinate nicotinamide. H121 acts as the Proton acceptor in catalysis. Zn(2+) is bound by residues C129, C132, C150, and C152. NAD(+) contacts are provided by T190, S191, N213, and L231.

This sequence belongs to the sirtuin family. Class U subfamily. Requires Zn(2+) as cofactor.

The protein localises to the cytoplasm. The enzyme catalyses N(6)-acetyl-L-lysyl-[protein] + NAD(+) + H2O = 2''-O-acetyl-ADP-D-ribose + nicotinamide + L-lysyl-[protein]. Its function is as follows. NAD-dependent protein deacetylase which modulates the activities of several enzymes which are inactive in their acetylated form. This Cutibacterium acnes (strain DSM 16379 / KPA171202) (Propionibacterium acnes) protein is NAD-dependent protein deacetylase.